The chain runs to 91 residues: DNA-directed RNA polymerase subunit omega (91 aa).

This sequence belongs to the RNA polymerase subunit omega family. In terms of assembly, the RNAP catalytic core consists of 2 alpha, 1 beta, 1 beta' and 1 omega subunit. When a sigma factor is associated with the core the holoenzyme is formed, which can initiate transcription.

The catalysed reaction is RNA(n) + a ribonucleoside 5'-triphosphate = RNA(n+1) + diphosphate. Promotes RNA polymerase assembly. Latches the N- and C-terminal regions of the beta' subunit thereby facilitating its interaction with the beta and alpha subunits. The chain is DNA-directed RNA polymerase subunit omega from Sodalis glossinidius (strain morsitans).